The chain runs to 470 residues: Cysteine--tRNA ligase (470 aa).

Cysteine 27 serves as a coordination point for Zn(2+). Residues 29–39 carry the 'HIGH' region motif; that stretch reads PTVYNHIHIGN. Zn(2+)-binding residues include cysteine 207, histidine 232, and glutamate 236. Residues 265–269 carry the 'KMSKS' region motif; it reads KMAKS. Residue lysine 268 coordinates ATP.

Belongs to the class-I aminoacyl-tRNA synthetase family. As to quaternary structure, monomer. The cofactor is Zn(2+).

The protein localises to the cytoplasm. The enzyme catalyses tRNA(Cys) + L-cysteine + ATP = L-cysteinyl-tRNA(Cys) + AMP + diphosphate. In Rubrobacter xylanophilus (strain DSM 9941 / JCM 11954 / NBRC 16129 / PRD-1), this protein is Cysteine--tRNA ligase.